Consider the following 290-residue polypeptide: uncharacterized protein (290 aa).

Lys203 acts as the Schiff-base intermediate with substrate in catalysis.

Belongs to the DeoC/FbaB aldolase family.

This is an uncharacterized protein from Pasteurella multocida (strain Pm70).